The chain runs to 226 residues: Protein FMP52-1, mitochondrial (226 aa).

A mitochondrion-targeting transit peptide spans 1–43 (MSAFVLGSTGLVGLQILKVLDSSTAFKKVSTVSRRLPSVTSGK).

It belongs to the FMP52 family.

The protein resides in the mitochondrion outer membrane. The sequence is that of Protein FMP52-1, mitochondrial (FMP521) from Scheffersomyces stipitis (strain ATCC 58785 / CBS 6054 / NBRC 10063 / NRRL Y-11545) (Yeast).